The chain runs to 357 residues: Anthranilate phosphoribosyltransferase (357 aa).

5-phospho-alpha-D-ribose 1-diphosphate is bound by residues Gly91, 94 to 95 (GD), Thr99, 101 to 104 (NIST), 119 to 127 (KHGNRSVSS), and Ser131. Residue Gly91 participates in anthranilate binding. Position 103 (Ser103) interacts with Mg(2+). Asn122 is an anthranilate binding site. Arg177 is an anthranilate binding site. 2 residues coordinate Mg(2+): Asp235 and Glu236.

It belongs to the anthranilate phosphoribosyltransferase family. As to quaternary structure, homodimer. It depends on Mg(2+) as a cofactor.

It carries out the reaction N-(5-phospho-beta-D-ribosyl)anthranilate + diphosphate = 5-phospho-alpha-D-ribose 1-diphosphate + anthranilate. Its pathway is amino-acid biosynthesis; L-tryptophan biosynthesis; L-tryptophan from chorismate: step 2/5. In terms of biological role, catalyzes the transfer of the phosphoribosyl group of 5-phosphorylribose-1-pyrophosphate (PRPP) to anthranilate to yield N-(5'-phosphoribosyl)-anthranilate (PRA). This chain is Anthranilate phosphoribosyltransferase, found in Shewanella baltica (strain OS185).